The sequence spans 71 residues: Ceratotoxin-A (71 aa).

A signal peptide spans 1 to 23; the sequence is MANLKAVFLICIVAFIAFQCVVA. Propeptides lie at residues 24–35 and 65–71; these read EPAAEDSIVVKR and VAAGLVG.

Homomer of four to six subunits.

The protein localises to the secreted. Its function is as follows. Female-specific peptides with potent activity against Gram-positive and Gram-negative bacteria. They have as well hemolytic activity. The protein is Ceratotoxin-A (CTXA2) of Ceratitis capitata (Mediterranean fruit fly).